Consider the following 324-residue polypeptide: Pepsin-2B (324 aa).

A Peptidase A1 domain is found at 14–321 (YYGVISIGTP…DRTNNKVGFA (308 aa)). Asp32 is a catalytic residue. A disulfide bond links Cys45 and Cys50. The interval 86–109 (QDTVSVGGGSDPNQELGESQTEPG) is disordered. Residues 96–107 (DPNQELGESQTE) are compositionally biased toward polar residues. Cys206 and Cys209 are oxidised to a cystine. The active site involves Asp214. A disulfide bridge connects residues Cys247 and Cys280.

This sequence belongs to the peptidase A1 family.

This chain is Pepsin-2B, found in Gadus morhua (Atlantic cod).